Here is a 602-residue protein sequence, read N- to C-terminus: Adenylosuccinate synthetase (602 aa).

GTP contacts are provided by residues 74–80 (GDEGKGK) and 104–106 (GHT). Asp-75 serves as the catalytic Proton acceptor. Residues Asp-75 and Gly-104 each coordinate Mg(2+). IMP contacts are provided by residues 75–78 (DEGK), 102–105 (NAGH), Thr-189, Lys-203, Gln-315, Thr-331, and Lys-459. The active-site Proton donor is the His-105. Residue 455 to 461 (AVTKKPR) participates in substrate binding. Residues Arg-461 and 589–591 (GNG) contribute to the GTP site.

It belongs to the adenylosuccinate synthetase family. As to quaternary structure, homodimer. It depends on Mg(2+) as a cofactor.

The protein localises to the cytoplasm. It catalyses the reaction IMP + L-aspartate + GTP = N(6)-(1,2-dicarboxyethyl)-AMP + GDP + phosphate + 2 H(+). The protein operates within purine metabolism; AMP biosynthesis via de novo pathway; AMP from IMP: step 1/2. Its function is as follows. Plays an important role in the salvage pathway for purine nucleotide biosynthesis. Catalyzes the first committed step in the biosynthesis of AMP from IMP. This is Adenylosuccinate synthetase from Trypanosoma brucei brucei (strain 927/4 GUTat10.1).